Here is a 548-residue protein sequence, read N- to C-terminus: Copine-2 (548 aa).

C2 domains are found at residues 6 to 131 (DGGA…TRPL) and 138 to 263 (PAGK…PLEI). Ca(2+) is bound by residues aspartate 39, aspartate 45, aspartate 97, aspartate 99, serine 102, aspartate 109, aspartate 170, aspartate 176, aspartate 232, aspartate 234, and aspartate 240. Residues 247–304 (TSVLQMSEARDGVPLEIECINPKKQRKKKSYKNSGIIILRSCKIHRNYSFLDYILGGC) are linker region. One can recognise a VWFA domain in the interval 305-507 (QLMFTVGIDF…AARDIVQFVP (203 aa)).

The protein belongs to the copine family. Ca(2+) is required as a cofactor.

The protein localises to the cytoplasm. The protein resides in the nucleus. Its subcellular location is the cell membrane. Calcium-dependent phospholipid-binding protein that plays a role in calcium-mediated intracellular processes. Exhibits calcium-dependent cell membrane binding properties. This Mus musculus (Mouse) protein is Copine-2.